The primary structure comprises 279 residues: Putative ABC transporter ATP-binding protein GSU3001 (279 aa).

The 237-residue stretch at 1–237 folds into the ABC transporter domain; the sequence is MRFSVDLKAY…PAEMESVKLR (237 aa). Residue 36-43 coordinates ATP; the sequence is GSNGSGKT.

The protein belongs to the ABC transporter superfamily.

The protein localises to the cell inner membrane. Probably part of an ABC transporter complex. Responsible for energy coupling to the transport system. The sequence is that of Putative ABC transporter ATP-binding protein GSU3001 from Geobacter sulfurreducens (strain ATCC 51573 / DSM 12127 / PCA).